A 306-amino-acid chain; its full sequence is tRNA dimethylallyltransferase 1 (306 aa).

13 to 20 provides a ligand contact to ATP; sequence GPTASGKT. A substrate-binding site is contributed by 15 to 20; the sequence is TASGKT. The interaction with substrate tRNA stretch occupies residues 38–41; sequence DSRQ.

Belongs to the IPP transferase family. In terms of assembly, monomer. It depends on Mg(2+) as a cofactor.

The enzyme catalyses adenosine(37) in tRNA + dimethylallyl diphosphate = N(6)-dimethylallyladenosine(37) in tRNA + diphosphate. Functionally, catalyzes the transfer of a dimethylallyl group onto the adenine at position 37 in tRNAs that read codons beginning with uridine, leading to the formation of N6-(dimethylallyl)adenosine (i(6)A). The polypeptide is tRNA dimethylallyltransferase 1 (Azobacteroides pseudotrichonymphae genomovar. CFP2).